The chain runs to 1188 residues: Oxysterol-binding protein homolog 1 (1188 aa).

ANK repeat units follow at residues 51-80, 96-125, and 196-225; these read VLHL…STTN, NGNT…INDC, and TGDT…DPFK. In terms of domain architecture, PH spans 330 to 379; that stretch reads MSSCSLHLDSSEKLKFEIIGGNNGVIRWHLKGNHPIETNRWVWAIQGAIR. Ser-394 bears the Phosphoserine mark. Disordered regions lie at residues 415-546 and 661-692; these read ATSK…GDED and QKKL…QEST. Residues 424-433 are compositionally biased toward polar residues; that stretch reads PHLSKSTLTQ. The segment covering 443–462 has biased composition (low complexity); it reads TNNNNNKSNNDYDDNNNNNN. The segment covering 463 to 473 has biased composition (acidic residues); that stretch reads NDDDDYDDDDE. Phosphoserine is present on residues Ser-490 and Ser-500. Residues 514-529 show a composition bias toward acidic residues; it reads PSDDEGYSEDDSDDDG. Phosphoserine occurs at positions 678, 683, and 691. Thr-692 and Thr-694 each carry phosphothreonine. Ser-708 and Ser-712 each carry phosphoserine. An FFAT motif is present at residues 716-722; that stretch reads EFFDAEE. Residues 721 to 755 are disordered; the sequence is EEAASDKKANDSEDLTTNKETPANAKPQEEAPEDE. The interval 800–1174 is OSBP-related domain (ORD); that stretch reads LWSVLKSMVG…YWKFNGEYWN (375 aa). 2 residues coordinate ergosterol: Asp-834 and Lys-962.

The protein belongs to the OSBP family. As to quaternary structure, interacts with NVJ1. Interacts with the AAA ATPase AFG2; regulates OSH1 membrane association. AFG2 is required for membrane dissociation of OSH1. Interacts with SCS2.

The protein resides in the golgi apparatus membrane. It is found in the nucleus outer membrane. The protein localises to the endoplasmic reticulum membrane. Its subcellular location is the vacuole membrane. Its function is as follows. Lipid transport protein (LTP) involved in non-vesicular transfer of lipids between membranes. Functions in phosphoinositide-coupled directional transport of various lipids by carrying the lipid molecule in a hydrophobic pocket and transferring it between membranes through the cytosol. Involved in maintenance of intracellular sterol distribution and homeostasis. Involved in non-vesicular transport of ergosterol and PI(4)P at the NVJ. Binds sterol and PI4P in a mutually exclusive manner. May be involved in formation of PMN vesicles by altering the membrane lipid composition. The chain is Oxysterol-binding protein homolog 1 from Saccharomyces cerevisiae (strain ATCC 204508 / S288c) (Baker's yeast).